The sequence spans 490 residues: Histone-lysine N-methyltransferase, H3 lysine-9 specific (490 aa).

The region spanning 8–69 is the Chromo domain; it reads YEVERIVDEK…RKRRLKGSNS (62 aa). Disordered regions lie at residues 61–133 and 150–190; these read KRRL…TALT and KKLG…KPRN. Over residues 102 to 114 the composition is skewed to basic and acidic residues; that stretch reads FSRELNVKKENKK. Residues 115-133 are compositionally biased toward polar residues; that stretch reads VFSSQTTKRQSRKQSTALT. Lys127 bears the N6,N6,N6-trimethyllysine; alternate mark. Lys127 carries the post-translational modification N6-methyllysine; alternate. Basic and acidic residues predominate over residues 155–168; sequence TRNEVKEESQKREL. Polar residues predominate over residues 169–185; sequence VSNSIKEATSPKTSSIL. The Pre-SET domain maps to 258–325; sequence SGCNCSSLGG…ECPNRVVQRG (68 aa). The Zn(2+) site is built by Cys260, Cys262, Cys268, Cys276, Cys278, Cys307, Cys311, Cys313, and Cys317. The region spanning 328–452 is the SET domain; it reads LPLEIFKTKE…PLEELTFDYA (125 aa). S-adenosyl-L-methionine is bound by residues 338-340, Tyr381, Arg406, and 407-410; these read KGW and FFNH. Residue Cys412 participates in Zn(2+) binding. The autoregulatory loop stretch occupies residues 453–472; that stretch reads GAKDFSPVQSQKSQQNRISK. Lys455 carries the post-translational modification N6,N6,N6-trimethyllysine; by autocatalysis; alternate. Residue Lys455 is modified to N6,N6-dimethyllysine; by autocatalysis; alternate. Residue Lys455 is modified to N6-methyllysine; by autocatalysis; alternate. Residue Lys464 is modified to N6-methyllysine. Residues 473–489 enclose the Post-SET domain; that stretch reads LRRQCKCGSANCRGWLF. Cys477, Cys479, and Cys484 together coordinate Zn(2+). S-adenosyl-L-methionine is bound at residue 477–478; that stretch reads CK.

It belongs to the class V-like SAM-binding methyltransferase superfamily. Histone-lysine methyltransferase family. Suvar3-9 subfamily. Component of the Clr4 methyltransferase complex (ClrC) composed of at least clr4, rik1, pcu4, rbx1, raf1 and raf2. The cullin pcu4, rik1, raf1, raf2 and the ring-box protein rbx1 are components of an E3 ubiquitin ligase, whose activity is essential for heterochromatin assembly. Interacts directly with pcu4. Interacts with mlo3. Post-translationally, autocatalytic methylation of specific lysine residues in an internal loop (autoregulatory loop) promote a conformational switch that enhances the H3K9me activity of clr4.

The protein localises to the nucleus. It localises to the cytoplasm. The protein resides in the cytoskeleton. It is found in the microtubule organizing center. Its subcellular location is the spindle pole body. The protein localises to the chromosome. The enzyme catalyses L-lysyl(9)-[histone H3] + 3 S-adenosyl-L-methionine = N(6),N(6),N(6)-trimethyl-L-lysyl(9)-[histone H3] + 3 S-adenosyl-L-homocysteine + 3 H(+). The catalysed reaction is N(6)-methyl-L-lysyl(9)-[histone H3] + S-adenosyl-L-methionine = N(6),N(6)-dimethyl-L-lysyl(9)-[histone H3] + S-adenosyl-L-homocysteine + H(+). It carries out the reaction N(6),N(6)-dimethyl-L-lysyl(9)-[histone H3] + S-adenosyl-L-methionine = N(6),N(6),N(6)-trimethyl-L-lysyl(9)-[histone H3] + S-adenosyl-L-homocysteine + H(+). It catalyses the reaction L-lysyl-[protein] + S-adenosyl-L-methionine = N(6)-methyl-L-lysyl-[protein] + S-adenosyl-L-homocysteine + H(+). The enzyme catalyses N(6)-methyl-L-lysyl-[protein] + S-adenosyl-L-methionine = N(6),N(6)-dimethyl-L-lysyl-[protein] + S-adenosyl-L-homocysteine + H(+). The catalysed reaction is N(6),N(6)-dimethyl-L-lysyl-[protein] + S-adenosyl-L-methionine = N(6),N(6),N(6)-trimethyl-L-lysyl-[protein] + S-adenosyl-L-homocysteine + H(+). It carries out the reaction L-lysyl(9)-[histone H3] + S-adenosyl-L-methionine = N(6)-methyl-L-lysyl(9)-[histone H3] + S-adenosyl-L-homocysteine + H(+). An internal loop (autoregulatory loop) inhibits the catalytic activity of the enzyme by blocking the histone H3K9 substrate-binding pocket. Autocatalytic methylation of specific lysine residues in this loop promote a conformational switch that enhances the H3K9me activity of clr4. Its function is as follows. Histone methyltransferase which contributes to the establishment of heterochromatin by specifically methylating histone H3 to form H3K9me. Part of the Clr4 methyltransferase complex (ClrC). ClrC preferentially ubiquitylates H3K14 and ClrC-mediated H3 ubiquitination promotes clr4 methyltransferase activity. Clr4 functions as a reader and writer of H3K9 methylation. It sets the H3K9me mark and afterwards this H3K9me mark is recognized by the chromodomains of clr4 and swi6/HP1, which then recruit additional clr4 leading to the methylation of neighboring nucleosomes. H3K9me represents a specific tag for epigenetic transcriptional repression by recruiting swi6/HP1 to methylated histones which leads to transcriptional silencing within centromeric heterochromatin, telomeres, ribosomal DNA repeats, and the silent mating-type region. Clr4 methyltransferase activity promotes the assembly of a tripartite complex composed of ClrC and complexes involved in siRNA generation. Apart from H3K9, also methylates non-histone proteins such as mlo3. Interacts with mlo3 to promote the processing of centromeric and antisense RNAs. The protein is Histone-lysine N-methyltransferase, H3 lysine-9 specific (clr4) of Schizosaccharomyces pombe (strain 972 / ATCC 24843) (Fission yeast).